The following is a 249-amino-acid chain: Pyridoxine 5'-phosphate synthase (249 aa).

Asparagine 12 contributes to the 3-amino-2-oxopropyl phosphate binding site. A 1-deoxy-D-xylulose 5-phosphate-binding site is contributed by 14 to 15; that stretch reads DH. Arginine 23 is a 3-amino-2-oxopropyl phosphate binding site. The active-site Proton acceptor is histidine 48. 1-deoxy-D-xylulose 5-phosphate is bound by residues arginine 50 and histidine 55. Glutamate 75 acts as the Proton acceptor in catalysis. 1-deoxy-D-xylulose 5-phosphate is bound at residue threonine 105. Histidine 199 (proton donor) is an active-site residue. 3-amino-2-oxopropyl phosphate contacts are provided by residues glycine 200 and 221–222; that span reads GH.

The protein belongs to the PNP synthase family. Homooctamer; tetramer of dimers.

It localises to the cytoplasm. The enzyme catalyses 3-amino-2-oxopropyl phosphate + 1-deoxy-D-xylulose 5-phosphate = pyridoxine 5'-phosphate + phosphate + 2 H2O + H(+). Its pathway is cofactor biosynthesis; pyridoxine 5'-phosphate biosynthesis; pyridoxine 5'-phosphate from D-erythrose 4-phosphate: step 5/5. Functionally, catalyzes the complicated ring closure reaction between the two acyclic compounds 1-deoxy-D-xylulose-5-phosphate (DXP) and 3-amino-2-oxopropyl phosphate (1-amino-acetone-3-phosphate or AAP) to form pyridoxine 5'-phosphate (PNP) and inorganic phosphate. This chain is Pyridoxine 5'-phosphate synthase, found in Roseobacter denitrificans (strain ATCC 33942 / OCh 114) (Erythrobacter sp. (strain OCh 114)).